A 429-amino-acid polypeptide reads, in one-letter code: Adenosylhomocysteinase (429 aa).

Thr64, Asp136, and Glu161 together coordinate substrate. Thr162–Thr164 serves as a coordination point for NAD(+). Residues Lys191 and Asp195 each contribute to the substrate site. Residues Asn196, Gly225 to Gly230, Glu248, Asn283, Ser304 to His306, and Asn351 each bind NAD(+).

This sequence belongs to the adenosylhomocysteinase family. NAD(+) serves as cofactor.

Its subcellular location is the cytoplasm. The catalysed reaction is S-adenosyl-L-homocysteine + H2O = L-homocysteine + adenosine. Its pathway is amino-acid biosynthesis; L-homocysteine biosynthesis; L-homocysteine from S-adenosyl-L-homocysteine: step 1/1. Its function is as follows. May play a key role in the regulation of the intracellular concentration of adenosylhomocysteine. The chain is Adenosylhomocysteinase from Thermosynechococcus vestitus (strain NIES-2133 / IAM M-273 / BP-1).